A 125-amino-acid chain; its full sequence is Outer membrane protein assembly factor BamE (125 aa).

A signal peptide spans 1 to 17; sequence MNKTLILALSALLGLAA. C18 carries N-palmitoyl cysteine lipidation. C18 carries the S-diacylglycerol cysteine lipid modification.

This sequence belongs to the BamE family. As to quaternary structure, part of the Bam complex.

It localises to the cell outer membrane. Functionally, part of the outer membrane protein assembly complex, which is involved in assembly and insertion of beta-barrel proteins into the outer membrane. This Neisseria meningitidis serogroup B (strain ATCC BAA-335 / MC58) protein is Outer membrane protein assembly factor BamE.